A 465-amino-acid polypeptide reads, in one-letter code: Ribosomal oxygenase 2 (465 aa).

Residues 139–271 (QPQRFKDELW…NSWGDFLLDT (133 aa)) enclose the JmjC domain. Positions 179, 181, and 240 each coordinate Fe cation. Ser309 carries the phosphoserine modification.

The protein belongs to the ROX family. MINA53 subfamily. It depends on Fe(2+) as a cofactor. As to expression, expressed in liver, skeletal muscle, heart, pancreas, and placenta. Not detected in brain, lung or kidney. Expressed in several lung cancer tissues, but is barely detected in the adjacent non-cancerous tissues. Also highly expressed in several esophageal squamous cell carcinoma (ESCC), and colon cancer tissues, and in various cancer cell lines.

It is found in the nucleus. Its subcellular location is the nucleolus. The catalysed reaction is L-histidyl-[protein] + 2-oxoglutarate + O2 = (3S)-3-hydroxy-L-histidyl-[protein] + succinate + CO2. It catalyses the reaction L-histidyl-[ribosomal protein uL15] + 2-oxoglutarate + O2 = (3S)-3-hydroxy-L-histidyl-[ribosomal protein uL15] + succinate + CO2. Functionally, oxygenase that can act as both a histone lysine demethylase and a ribosomal histidine hydroxylase. Is involved in the demethylation of trimethylated 'Lys-9' on histone H3 (H3K9me3), leading to an increase in ribosomal RNA expression. Also catalyzes the hydroxylation of 60S ribosomal protein L27a on 'His-39'. May play an important role in cell growth and survival. May be involved in ribosome biogenesis, most likely during the assembly process of pre-ribosomal particles. The polypeptide is Ribosomal oxygenase 2 (Homo sapiens (Human)).